The primary structure comprises 222 residues: uncharacterized protein (222 aa).

Residues 1 to 27 constitute a signal peptide (tat-type signal); sequence MSFTRRKFVLGMGTVIFFTGSASSLLA. 4Fe-4S ferredoxin-type domains lie at 37-67, 83-114, and 115-144; these read YAMI…AQGS, TQYH…RDEQ, and GIVR…LNPV. [4Fe-4S] cluster-binding residues include Cys46, Cys49, Cys52, Cys56, Cys92, Cys95, Cys100, Cys104, Cys124, Cys127, Cys130, Cys134, Cys151, Cys154, Cys167, and Cys171.

In terms of processing, exported by the Tat system. The position of the signal peptide cleavage has not been experimentally proven. Can also be exported by the Sec system.

This is an uncharacterized protein from Escherichia coli (strain K12).